We begin with the raw amino-acid sequence, 204 residues long: MMRTLITTHPLLLLLLLQQLLQPVQLQEVDTDFDSPDDEMEELEEYLEEFQSTGPTRPPTKENVERRVIIEPGMPLYDRDYCNEEIKRKNVYHKYRCVTEHYFLLMQYDELQKICYNRFVPCKNGVRKCNRSKGLVEGVYCNLTEALEIPGCEYKSFYRTGYVLITCAWQNEIHKLIPHTINDLVEPPKHRSFLNEDGVFVIPP.

The N-terminal stretch at 1 to 26 (MMRTLITTHPLLLLLLLQQLLQPVQL) is a signal peptide. 3 disulfides stabilise this stretch: C97-C152, C115-C167, and C122-C129. 2 N-linked (GlcNAc...) asparagine glycosylation sites follow: N130 and N142.

Belongs to the pancreatic ribonuclease family.

Its subcellular location is the secreted. Does not exhibit any ribonuclease activity. This Chlorocebus aethiops (Green monkey) protein is Inactive ribonuclease-like protein 9 (RNASE9).